We begin with the raw amino-acid sequence, 356 residues long: Histidinol-phosphate aminotransferase (356 aa).

Lysine 214 carries the N6-(pyridoxal phosphate)lysine modification.

This sequence belongs to the class-II pyridoxal-phosphate-dependent aminotransferase family. Histidinol-phosphate aminotransferase subfamily. Homodimer. The cofactor is pyridoxal 5'-phosphate.

The enzyme catalyses L-histidinol phosphate + 2-oxoglutarate = 3-(imidazol-4-yl)-2-oxopropyl phosphate + L-glutamate. The protein operates within amino-acid biosynthesis; L-histidine biosynthesis; L-histidine from 5-phospho-alpha-D-ribose 1-diphosphate: step 7/9. This is Histidinol-phosphate aminotransferase from Escherichia coli O81 (strain ED1a).